The primary structure comprises 258 residues: UPF0246 protein YaaA (258 aa).

The protein belongs to the UPF0246 family.

The polypeptide is UPF0246 protein YaaA (Shigella dysenteriae serotype 1 (strain Sd197)).